A 71-amino-acid polypeptide reads, in one-letter code: DNA-directed RNA polymerase subunit omega (71 aa).

The protein belongs to the RNA polymerase subunit omega family. The RNAP catalytic core consists of 2 alpha, 1 beta/beta' and 1 omega subunit. When a sigma factor is associated with the core the holoenzyme is formed, which can initiate transcription.

It catalyses the reaction RNA(n) + a ribonucleoside 5'-triphosphate = RNA(n+1) + diphosphate. Promotes RNA polymerase assembly. Latches the N- and C-terminal regions of the beta' subunit thereby facilitating its interaction with the beta and alpha subunits. The sequence is that of DNA-directed RNA polymerase subunit omega from Wolinella succinogenes (strain ATCC 29543 / DSM 1740 / CCUG 13145 / JCM 31913 / LMG 7466 / NCTC 11488 / FDC 602W) (Vibrio succinogenes).